Here is a 327-residue protein sequence, read N- to C-terminus: DNA-directed RNA polymerase subunit alpha (327 aa).

An alpha N-terminal domain (alpha-NTD) region spans residues 1 to 233 (MVREKVKVST…NLFIPFLHVE (233 aa)). The tract at residues 265–327 (KELAFQYIFI…KKILDILEKK (63 aa)) is alpha C-terminal domain (alpha-CTD).

The protein belongs to the RNA polymerase alpha chain family. In terms of assembly, in plastids the minimal PEP RNA polymerase catalytic core is composed of four subunits: alpha, beta, beta', and beta''. When a (nuclear-encoded) sigma factor is associated with the core the holoenzyme is formed, which can initiate transcription.

It is found in the plastid. It localises to the chloroplast. It carries out the reaction RNA(n) + a ribonucleoside 5'-triphosphate = RNA(n+1) + diphosphate. DNA-dependent RNA polymerase catalyzes the transcription of DNA into RNA using the four ribonucleoside triphosphates as substrates. This Olimarabidopsis pumila (Dwarf rocket) protein is DNA-directed RNA polymerase subunit alpha.